The primary structure comprises 111 residues: T cell receptor beta variable 30 (111 aa).

The N-terminal stretch at 1 to 18 (MLCSLLALLLGTFFGVRS) is a signal peptide. One can recognise an Ig-like domain in the interval 19–111 (QTIHQWPATL…DSGFYLCAWS (93 aa)). Cysteines 40 and 108 form a disulfide. Asn-80 is a glycosylation site (N-linked (GlcNAc...) asparagine).

As to quaternary structure, alpha-beta TR is a heterodimer composed of an alpha and beta chain; disulfide-linked. The alpha-beta TR is associated with the transmembrane signaling CD3 coreceptor proteins to form the TR-CD3 (TcR or TCR). The assembly of alpha-beta TR heterodimers with CD3 occurs in the endoplasmic reticulum where a single alpha-beta TR heterodimer associates with one CD3D-CD3E heterodimer, one CD3G-CD3E heterodimer and one CD247 homodimer forming a stable octameric structure. CD3D-CD3E and CD3G-CD3E heterodimers preferentially associate with TR alpha and TR beta chains, respectively. The association of the CD247 homodimer is the last step of TcR assembly in the endoplasmic reticulum and is required for transport to the cell surface.

It is found in the cell membrane. Functionally, v region of the variable domain of T cell receptor (TR) beta chain that participates in the antigen recognition. Alpha-beta T cell receptors are antigen specific receptors which are essential to the immune response and are present on the cell surface of T lymphocytes. Recognize peptide-major histocompatibility (MH) (pMH) complexes that are displayed by antigen presenting cells (APC), a prerequisite for efficient T cell adaptive immunity against pathogens. Binding of alpha-beta TR to pMH complex initiates TR-CD3 clustering on the cell surface and intracellular activation of LCK that phosphorylates the ITAM motifs of CD3G, CD3D, CD3E and CD247 enabling the recruitment of ZAP70. In turn ZAP70 phosphorylates LAT, which recruits numerous signaling molecules to form the LAT signalosome. The LAT signalosome propagates signal branching to three major signaling pathways, the calcium, the mitogen-activated protein kinase (MAPK) kinase and the nuclear factor NF-kappa-B (NF-kB) pathways, leading to the mobilization of transcription factors that are critical for gene expression and essential for T cell growth and differentiation. The T cell repertoire is generated in the thymus, by V-(D)-J rearrangement. This repertoire is then shaped by intrathymic selection events to generate a peripheral T cell pool of self-MH restricted, non-autoaggressive T cells. Post-thymic interaction of alpha-beta TR with the pMH complexes shapes TR structural and functional avidity. This is T cell receptor beta variable 30 from Homo sapiens (Human).